A 302-amino-acid chain; its full sequence is Protein ECM11 (302 aa).

Disordered stretches follow at residues 1 to 67 (MTVI…TDKQ) and 162 to 187 (SLNG…GSYQ). The segment covering 35–46 (NKPPSSINSRSG) has biased composition (polar residues). Over residues 56–67 (APEKKINNTDKQ) the composition is skewed to basic and acidic residues. Residues 162–171 (SLNGENTSSP) show a composition bias toward polar residues.

In terms of assembly, interacts with CDC6.

It localises to the nucleus. May be involved in cell wall organization and biogenesis. This chain is Protein ECM11 (ECM11), found in Saccharomyces cerevisiae (strain ATCC 204508 / S288c) (Baker's yeast).